We begin with the raw amino-acid sequence, 345 residues long: Annexin A9 (345 aa).

Annexin repeat units lie at residues 41 to 112, 113 to 184, 197 to 266, and 270 to 341; these read FSAD…ALLQ, PAAH…ALAK, NLAA…NLAS, and NTPL…ALCR.

The protein belongs to the annexin family. In terms of assembly, homodimer.

In terms of biological role, may act as a low affinity receptor for acetylcholine. The chain is Annexin A9 (ANXA9) from Bos taurus (Bovine).